The following is a 250-amino-acid chain: Probable transcriptional regulatory protein RER_29220 (250 aa).

This sequence belongs to the TACO1 family.

Its subcellular location is the cytoplasm. The polypeptide is Probable transcriptional regulatory protein RER_29220 (Rhodococcus erythropolis (strain PR4 / NBRC 100887)).